The sequence spans 41 residues: Large ribosomal subunit protein bL36 (41 aa).

This sequence belongs to the bacterial ribosomal protein bL36 family.

This is Large ribosomal subunit protein bL36 from Jannaschia sp. (strain CCS1).